We begin with the raw amino-acid sequence, 500 residues long: Cytochrome P450 monooxygenase ausI (500 aa).

A helical membrane pass occupies residues 8 to 28 (LALLGQPLVPGLMVVSAILYL). Residue cysteine 440 coordinates heme.

This sequence belongs to the cytochrome P450 family. Requires heme as cofactor.

It localises to the membrane. It participates in secondary metabolite biosynthesis; terpenoid biosynthesis. In terms of biological role, cytochrome P450 monooxygenase; part of the gene cluster B that mediates the biosynthesis of the fungal meroterpenoid acetoxydehydroaustin. The first step of the pathway is the synthesis of 3,5-dimethylorsellinic acid by the polyketide synthase ausA. 3,5-dimethylorsellinic acid is then prenylated by the polyprenyl transferase ausN. Further epoxidation by the FAD-dependent monooxygenase ausM and cyclization by the probable terpene cyclase ausL lead to the formation of protoaustinoid A. Protoaustinoid A is then oxidized to spiro-lactone preaustinoid A3 by the combined action of the FAD-binding monooxygenases ausB and ausC, and the dioxygenase ausE. Acid-catalyzed keto-rearrangement and ring contraction of the tetraketide portion of preaustinoid A3 by ausJ lead to the formation of preaustinoid A4. The aldo-keto reductase ausK, with the help of ausH, is involved in the next step by transforming preaustinoid A4 into isoaustinone which is in turn hydroxylated by the P450 monooxygenase ausI to form austinolide. The cytochrome P450 monooxygenase ausG then modifies austinolide to austinol. Austinol is further acetylated to austin by the O-acetyltransferase ausP, which spontaneously changes to dehydroaustin. The cytochrome P450 monooxygenase then converts dehydroaustin is into 7-dehydrodehydroaustin. The hydroxylation catalyzed by ausR permits the second O-acetyltransferase ausQ to add an additional acetyl group to the molecule, leading to the formation of acetoxydehydroaustin. Due to genetic rearrangements of the clusters and the subsequent loss of some enzymes, the end product of the Penicillium brasilianum austinoid biosynthesis clusters is acetoxydehydroaustin. In Penicillium brasilianum, this protein is Cytochrome P450 monooxygenase ausI.